We begin with the raw amino-acid sequence, 828 residues long: DNA topoisomerase 3 (828 aa).

The region spanning 4-149 (RILNVAEKPS…KFEFYRAHFS (146 aa)) is the Toprim domain. In terms of domain architecture, Topo IA-type catalytic spans 167 to 617 (NEKDSIAVDT…STIEKYKQLY (451 aa)). The O-(5'-phospho-DNA)-tyrosine intermediate role is filled by Tyr361. The interval 763-828 (QQQQQQQQQQ…SDRNNNNFIF (66 aa)) is disordered.

The protein belongs to the type IA topoisomerase family.

The enzyme catalyses ATP-independent breakage of single-stranded DNA, followed by passage and rejoining.. Its function is as follows. Releases the supercoiling and torsional tension of DNA introduced during the DNA replication and transcription by transiently cleaving and rejoining one strand of the DNA duplex. Introduces a single-strand break via transesterification at a target site in duplex DNA. The scissile phosphodiester is attacked by the catalytic tyrosine of the enzyme, resulting in the formation of a DNA-(5'-phosphotyrosyl)-enzyme intermediate and the expulsion of a 3'-OH DNA strand. The free DNA strand than undergoes passage around the unbroken strand thus removing DNA supercoils. Finally, in the religation step, the DNA 3'-OH attacks the covalent intermediate to expel the active-site tyrosine and restore the DNA phosphodiester backbone. This is DNA topoisomerase 3 (top3) from Dictyostelium discoideum (Social amoeba).